The following is a 197-amino-acid chain: Imidazoleglycerol-phosphate dehydratase (197 aa).

This sequence belongs to the imidazoleglycerol-phosphate dehydratase family.

It localises to the cytoplasm. It catalyses the reaction D-erythro-1-(imidazol-4-yl)glycerol 3-phosphate = 3-(imidazol-4-yl)-2-oxopropyl phosphate + H2O. It functions in the pathway amino-acid biosynthesis; L-histidine biosynthesis; L-histidine from 5-phospho-alpha-D-ribose 1-diphosphate: step 6/9. This Streptomyces coelicolor (strain ATCC BAA-471 / A3(2) / M145) protein is Imidazoleglycerol-phosphate dehydratase (hisB).